The primary structure comprises 320 residues: tRNA(Ile)-lysidine synthase (320 aa).

Serine 33 to serine 38 contacts ATP.

Belongs to the tRNA(Ile)-lysidine synthase family.

It is found in the cytoplasm. It catalyses the reaction cytidine(34) in tRNA(Ile2) + L-lysine + ATP = lysidine(34) in tRNA(Ile2) + AMP + diphosphate + H(+). Its function is as follows. Ligates lysine onto the cytidine present at position 34 of the AUA codon-specific tRNA(Ile) that contains the anticodon CAU, in an ATP-dependent manner. Cytidine is converted to lysidine, thus changing the amino acid specificity of the tRNA from methionine to isoleucine. The protein is tRNA(Ile)-lysidine synthase of Mycolicibacterium paratuberculosis (strain ATCC BAA-968 / K-10) (Mycobacterium paratuberculosis).